A 148-amino-acid polypeptide reads, in one-letter code: uncharacterized protein (148 aa).

The first 35 residues, 1 to 35 (MRCVTRTRNWWRRAARMPRAGSSAWWVAVCKQVCT), serve as a signal peptide directing secretion.

The protein resides in the secreted. This is an uncharacterized protein from Homo sapiens (Human).